We begin with the raw amino-acid sequence, 516 residues long: Rho guanine nucleotide exchange factor 9 (516 aa).

Residues 8-67 (DSIVSAEAVWDHVTMANRELAFKAGDVIKVLDASNKDWWWGQIDDEEGWFPASFVRLWVN) form the SH3 domain. The tract at residues 100–110 (RDQMRANVINE) is interaction with GPHN. The region spanning 103–287 (MRANVINEIM…RNVTQQINER (185 aa)) is the DH domain. The PH domain maps to 318–425 (ELIYTGEMAW…WLRAFREERK (108 aa)). The tract at residues 453–480 (PKQKGVNSARSVPPSYPPPQDPLNHGQY) is disordered. Ser502 bears the Phosphoserine mark.

As to quaternary structure, interacts with GPHN. In terms of tissue distribution, detected in brain. Detected at low levels in heart.

It localises to the cytoplasm. It is found in the postsynaptic density. Its function is as follows. Acts as a guanine nucleotide exchange factor (GEF) for CDC42. Promotes formation of GPHN clusters. This chain is Rho guanine nucleotide exchange factor 9 (ARHGEF9), found in Homo sapiens (Human).